We begin with the raw amino-acid sequence, 231 residues long: 5'-methylthioadenosine/S-adenosylhomocysteine nucleosidase (231 aa).

Glu12 serves as the catalytic Proton acceptor. Substrate is bound by residues Gly78, Met153, and 174 to 175 (ME). Asp198 serves as the catalytic Proton donor.

This sequence belongs to the PNP/UDP phosphorylase family. MtnN subfamily.

It carries out the reaction S-adenosyl-L-homocysteine + H2O = S-(5-deoxy-D-ribos-5-yl)-L-homocysteine + adenine. The catalysed reaction is S-methyl-5'-thioadenosine + H2O = 5-(methylsulfanyl)-D-ribose + adenine. The enzyme catalyses 5'-deoxyadenosine + H2O = 5-deoxy-D-ribose + adenine. It functions in the pathway amino-acid biosynthesis; L-methionine biosynthesis via salvage pathway; S-methyl-5-thio-alpha-D-ribose 1-phosphate from S-methyl-5'-thioadenosine (hydrolase route): step 1/2. Functionally, catalyzes the irreversible cleavage of the glycosidic bond in both 5'-methylthioadenosine (MTA) and S-adenosylhomocysteine (SAH/AdoHcy) to adenine and the corresponding thioribose, 5'-methylthioribose and S-ribosylhomocysteine, respectively. Also cleaves 5'-deoxyadenosine, a toxic by-product of radical S-adenosylmethionine (SAM) enzymes, into 5-deoxyribose and adenine. This is 5'-methylthioadenosine/S-adenosylhomocysteine nucleosidase from Bacillus velezensis (strain DSM 23117 / BGSC 10A6 / LMG 26770 / FZB42) (Bacillus amyloliquefaciens subsp. plantarum).